We begin with the raw amino-acid sequence, 411 residues long: Calmodulin-binding receptor-like cytoplasmic kinase 2 (411 aa).

2 disordered regions span residues 1–44 (MPSR…DTTT) and 66–99 (SNYIDNSKSSSDNNIRSRRSSTGSSSVQRSYGNA). 2 stretches are compositionally biased toward low complexity: residues 16 to 44 (TTSSNYSNTTFTDRSFPTTPARTSTDTTT) and 66 to 95 (SNYIDNSKSSSDNNIRSRRSSTGSSSVQRS). The residue at position 108 (T108) is a Phosphothreonine. The Protein kinase domain maps to 119-398 (FSPSFRIGQG…MKKCSEILWG (280 aa)). ATP contacts are provided by residues 125-133 (IGQGGFGTV) and K147. Positions 134–159 (YKVKLRDGKTFAVKRAKKSMHDDRQG) are caM-binding. D247 acts as the Proton acceptor in catalysis. 2 positions are modified to phosphoserine: S251 and S283. Residues T284 and T289 each carry the phosphothreonine modification. Y297 is modified (phosphotyrosine).

It belongs to the protein kinase superfamily. Ser/Thr protein kinase family. As to quaternary structure, interacts with calmodulin (CaM) in a Ca(2+)-dependent manner.

It is found in the cytoplasm. It carries out the reaction L-seryl-[protein] + ATP = O-phospho-L-seryl-[protein] + ADP + H(+). The catalysed reaction is L-threonyl-[protein] + ATP = O-phospho-L-threonyl-[protein] + ADP + H(+). This chain is Calmodulin-binding receptor-like cytoplasmic kinase 2 (CRCK2), found in Arabidopsis thaliana (Mouse-ear cress).